We begin with the raw amino-acid sequence, 443 residues long: Threonine/serine transporter TdcC (443 aa).

11 consecutive transmembrane segments (helical) span residues 22-42, 44-64, 97-117, 140-160, 163-183, 207-227, 261-281, 311-331, 366-386, 389-409, and 423-443; these read TTWTLGLFGTAIGAGVLFFPI, AGFGGLIPILLMLVLAYPIAF, GVVITFLYFFAICPLLWIYGV, FVALFLLLLMAFVIWFGKDLM, VMSYLVWPFIASLVLISLSLI, ILITVWLGISIMVFSFNFSPI, MLMVAVVMFFAFSCLFTLSPA, FAITLEYAASIIALVAIFKSF, ISMIFIMGSTWVVAYANPNIL, IEAMGAPIIASLLCLLPMYAI, and DNVFVTVIGLLTILNIVYKLF.

The protein belongs to the amino acid/polyamine transporter 2 family. SdaC/TdcC subfamily.

It localises to the cell inner membrane. It carries out the reaction L-threonine(in) + H(+)(in) = L-threonine(out) + H(+)(out). The enzyme catalyses L-serine(in) + H(+)(in) = L-serine(out) + H(+)(out). Its function is as follows. Involved in the import of threonine and serine into the cell, with the concomitant import of a proton (symport system). The chain is Threonine/serine transporter TdcC from Shigella sonnei (strain Ss046).